Reading from the N-terminus, the 908-residue chain is WD repeat-containing protein 44 (908 aa).

The segment at 1–163 (MMPLKMCTWG…SSADQLDASK (163 aa)) is binding activity. S17, S40, S61, S71, S86, and S116 each carry phosphoserine. Composition is skewed to polar residues over residues 108–120 (QQGS…QNAA) and 148–157 (NNLTEVSSAD). 5 disordered regions span residues 108–158 (QQGS…SADQ), 202–273 (APAK…KDNI), 309–341 (TAQE…RELT), 391–418 (VSND…RLKQ), and 454–474 (DEVF…GMPY). Phosphothreonine occurs at positions 151 and 211. The interval 203–249 (PAKPPRHLTPEPDIVASTKKPVPARPPPPTNFPPPRPPPPSRPAPPP) is important for interaction with ARHGAP26 AND ARHGAP10. Pro residues predominate over residues 225 to 248 (PARPPPPTNFPPPRPPPPSRPAPP). At S254 the chain carries Phosphoserine. The span at 254 to 270 (SDLEFEALKTPDLDVPK) shows a compositional bias: basic and acidic residues. The residue at position 263 (T263) is a Phosphothreonine. An important for interaction with RAB11A region spans residues 326 to 339 (VMGPQRPRSNSGRE). Phosphoserine occurs at positions 334 and 336. T341 and T396 each carry phosphothreonine. Phosphoserine occurs at positions 398, 465, 466, and 467. A compositionally biased stretch (acidic residues) spans 462-471 (DDPSSSDDEG). A Phosphotyrosine modification is found at Y474. The WD 1 repeat unit spans residues 504-543 (EHMGAVWTMKFSHCGRLLASAGQDNIVRIWALKNAFDYFN). Residues 552–587 (EGRVSPSPSQESLSSSKSDTDMGVCSGTDEDPDDKN) are disordered. S556 and S560 each carry phosphoserine. Residues 556–568 (SPSPSQESLSSSK) show a composition bias toward low complexity. 5 WD repeats span residues 600 to 638 (GHTA…CLCC), 640 to 680 (QHID…VALW), 685 to 724 (GQTK…YHTQ), 735 to 774 (KVGR…LSMK), and 779 to 818 (VNSS…SKFT).

Interacts preferentially with the GTP-bound form of RAB11 when membrane-associated. Interacts with GRAF1/ARHGAP26 or GRAF2/ARHGAP10; the interaction connects the endoplasmic reticulum (ER) with the endosomal tubule. Interacts with VAPA (via MSP domain) or VAPB (via MSP domain); the interaction connects the ER with the endosomal tubule. Does not bind to other Rab and Rho small G proteins. Post-translationally, phosphorylated by ATK1; the phosphorylation stabilizes its interaction with RAB11A and RAB11B. As to expression, expressed in heart; brain; spleen; lung; liver; muscle and kidney.

It localises to the cytoplasm. The protein localises to the cytosol. Its subcellular location is the perinuclear region. The protein resides in the endosome membrane. It is found in the golgi apparatus. It localises to the trans-Golgi network. Downstream effector for Rab11 which regulates Rab11 intracellular membrane trafficking functions such as endocytic recycling, intracellular ciliogenesis and protein export. ATK1-mediated phosphorylation of WDR44 induces binding to Rab11 which activates endocytic recycling of transferrin receptor back to the plasma membrane. When bound to Rab11, prevents the formation of the ciliogenic Rab11-Rabin8/RAB3IP-RAB11FIP3 complex, therefore inhibiting preciliary trafficking and ciliogenesis. May participate in neo-synthesized protein export by connecting the endoplasmic reticulum (ER) with the endosomal tubule via direct interactions with the integral ER proteins VAPA or VAPB and the endosomal protein GRAFs (GRAF1/ARHGAP26 or GRAF2/ARHGAP10), which facilitates the transfer of proteins such as E-cadherin, MPP14 and CFTR into a Rab8-Rab10-Rab11-dependent export route. This is WD repeat-containing protein 44 from Rattus norvegicus (Rat).